A 591-amino-acid polypeptide reads, in one-letter code: Splicing factor U2af large subunit A (591 aa).

The segment at 1-215 is disordered; that stretch reads MAEHDAPPES…QSKRMSGFDQ (215 aa). Residues 27-36 are compositionally biased toward polar residues; sequence SPQQDAQPLS. 2 stretches are compositionally biased toward basic and acidic residues: residues 37 to 79 and 157 to 191; these read SRDR…SRDR and RERS…DRDG. 2 RRM domains span residues 272–355 and 392–470; these read RRVY…RPTD and DRIF…RANQ.

It belongs to the splicing factor SR family.

Its subcellular location is the nucleus. Functionally, necessary for the splicing of pre-mRNA. This Triticum aestivum (Wheat) protein is Splicing factor U2af large subunit A (U2AF65A).